A 25-amino-acid chain; its full sequence is Ribosome-inactivating protein charantin (25 aa).

As to quaternary structure, monomer.

The enzyme catalyses Endohydrolysis of the N-glycosidic bond at one specific adenosine on the 28S rRNA.. Its function is as follows. Inhibits cell-free translation in a rabbit reticulocyte lysate system. This chain is Ribosome-inactivating protein charantin, found in Momordica charantia (Bitter gourd).